The following is a 314-amino-acid chain: RNA 2',3'-cyclic phosphodiesterase (314 aa).

His43 (proton donor) is an active-site residue. 2 consecutive short sequence motifs (HXTX) follow at residues 43 to 46 and 129 to 132; these read HITL and HITI. Residue His129 is the Proton acceptor of the active site.

The protein belongs to the 2H phosphoesterase superfamily. ThpR family.

The catalysed reaction is a 3'-end 2',3'-cyclophospho-ribonucleotide-RNA + H2O = a 3'-end 2'-phospho-ribonucleotide-RNA + H(+). Functionally, hydrolyzes RNA 2',3'-cyclic phosphodiester to an RNA 2'-phosphomonoester. This chain is RNA 2',3'-cyclic phosphodiesterase, found in Geobacillus stearothermophilus (Bacillus stearothermophilus).